The following is a 289-amino-acid chain: Acetylglutamate kinase (289 aa).

Residues 60–61, Arg82, and Asn182 contribute to the substrate site; that span reads GG.

This sequence belongs to the acetylglutamate kinase family. ArgB subfamily.

It localises to the cytoplasm. It catalyses the reaction N-acetyl-L-glutamate + ATP = N-acetyl-L-glutamyl 5-phosphate + ADP. It functions in the pathway amino-acid biosynthesis; L-arginine biosynthesis; N(2)-acetyl-L-ornithine from L-glutamate: step 2/4. In terms of biological role, catalyzes the ATP-dependent phosphorylation of N-acetyl-L-glutamate. The chain is Acetylglutamate kinase from Methanothrix thermoacetophila (strain DSM 6194 / JCM 14653 / NBRC 101360 / PT) (Methanosaeta thermophila).